The chain runs to 157 residues: Protein Smg homolog (157 aa).

It belongs to the Smg family.

This is Protein Smg homolog from Shewanella woodyi (strain ATCC 51908 / MS32).